Here is a 346-residue protein sequence, read N- to C-terminus: Very-long-chain 3-oxoacyl-CoA reductase (346 aa).

Residues 26–46 (SAYFLLAAGSLFVASRALTFV) form a helical membrane-spanning segment. Residues V71, D126, D134, N153, Y220, K224, I253, and S255 each contribute to the NADP(+) site. Y220 functions as the Proton donor in the catalytic mechanism. K224 functions as the Lowers pKa of active site Tyr in the catalytic mechanism.

The protein belongs to the short-chain dehydrogenases/reductases (SDR) family.

The protein resides in the endoplasmic reticulum membrane. The catalysed reaction is a very-long-chain (3R)-3-hydroxyacyl-CoA + NADP(+) = a very-long-chain 3-oxoacyl-CoA + NADPH + H(+). The protein operates within lipid metabolism; fatty acid biosynthesis. Functionally, component of the microsomal membrane bound fatty acid elongation system, which produces the 26-carbon very long-chain fatty acids (VLCFA) from palmitate. Catalyzes the reduction of the 3-ketoacyl-CoA intermediate that is formed in each cycle of fatty acid elongation. VLCFAs serve as precursors for ceramide and sphingolipids. In Aspergillus oryzae (strain ATCC 42149 / RIB 40) (Yellow koji mold), this protein is Very-long-chain 3-oxoacyl-CoA reductase.